Reading from the N-terminus, the 178-residue chain is CCHC-type zinc finger nucleic acid binding protein (178 aa).

S2 is modified (N-acetylserine). Residues 4–21 (NECFKCGRSGHWARECPT) form a CCHC-type 1 zinc finger. An N6-acetyllysine modification is found at K8. Omega-N-methylarginine; by PRMT1 occurs at positions 25 and 27. The segment at 25-38 (RGRGMRSRGRGGFT) is RNA-binding Arg/Gly-rich region (RGG-box). R32 and R34 each carry omega-N-methylarginine. S49 bears the Phosphoserine mark. 6 CCHC-type zinc fingers span residues 52 to 69 (DICYRCGESGHLAKDCDL), 72 to 90 (DEACYNCGRGGHIAKDCKE), 97 to 114 (QCCYNCGKPGHLARDCDH), 118 to 135 (QKCYSCGEFGHIQKDCTK), 136 to 153 (VKCYRCGETGHVAINCSK), and 157 to 174 (VNCYRCGESGHLARECTI). An omega-N-methylarginine mark is found at D72, G79, and R80.

Associates with the 40S ribosomal subunit, the 80S ribosome and with polysomes. Post-translationally, arginine methylation by PRMT1 in the Arg/Gly-rich region impedes RNA binding.

It localises to the nucleus. Its subcellular location is the cytoplasm. It is found in the endoplasmic reticulum. In terms of biological role, single-stranded DNA-binding protein that preferentially binds to the sterol regulatory element (SRE) sequence 5'-GTGCGGTG-3', and thereby mediates transcriptional repression. Has a role as transactivator of the Myc promoter. Binds single-stranded RNA in a sequence-specific manner. Binds G-rich elements in target mRNA coding sequences. Prevents G-quadruplex structure formation in vitro, suggesting a role in supporting translation by resolving stable structures on mRNAs. This chain is CCHC-type zinc finger nucleic acid binding protein, found in Mus musculus (Mouse).